The chain runs to 476 residues: Bifunctional protein HldE (476 aa).

The segment at 1–318 (MKPILPDYSQ…AEAIHGSQDT (318 aa)) is ribokinase. 195–198 (NMAE) contacts ATP. Asp264 is a catalytic residue. The segment at 344 to 476 (MTNGCFDILH…IIKAIKGGRG (133 aa)) is cytidylyltransferase.

In the N-terminal section; belongs to the carbohydrate kinase PfkB family. This sequence in the C-terminal section; belongs to the cytidylyltransferase family. Homodimer.

The enzyme catalyses D-glycero-beta-D-manno-heptose 7-phosphate + ATP = D-glycero-beta-D-manno-heptose 1,7-bisphosphate + ADP + H(+). The catalysed reaction is D-glycero-beta-D-manno-heptose 1-phosphate + ATP + H(+) = ADP-D-glycero-beta-D-manno-heptose + diphosphate. It participates in nucleotide-sugar biosynthesis; ADP-L-glycero-beta-D-manno-heptose biosynthesis; ADP-L-glycero-beta-D-manno-heptose from D-glycero-beta-D-manno-heptose 7-phosphate: step 1/4. Its pathway is nucleotide-sugar biosynthesis; ADP-L-glycero-beta-D-manno-heptose biosynthesis; ADP-L-glycero-beta-D-manno-heptose from D-glycero-beta-D-manno-heptose 7-phosphate: step 3/4. Its function is as follows. Catalyzes the phosphorylation of D-glycero-D-manno-heptose 7-phosphate at the C-1 position to selectively form D-glycero-beta-D-manno-heptose-1,7-bisphosphate. In terms of biological role, catalyzes the ADP transfer from ATP to D-glycero-beta-D-manno-heptose 1-phosphate, yielding ADP-D-glycero-beta-D-manno-heptose. The protein is Bifunctional protein HldE of Vibrio atlanticus (strain LGP32) (Vibrio splendidus (strain Mel32)).